Reading from the N-terminus, the 551-residue chain is NAD(P)H-quinone oxidoreductase chain 4 (551 aa).

Helical transmembrane passes span 25–45, 56–76, 111–131, 133–153, 157–177, 189–209, 233–253, 264–284, 298–318, 335–355, 356–376, 397–417, 438–458, and 485–505; these read FPWLSLSILFPIVGSLMVPFI, WFALGIALTTFLITVAAYLNG, LILLTSFITTLAVLAAWPVTF, PKLFFFLMLAMDGGQIAVFAV, LLFFLAWELELLPVYLLLAIW, FILYTAGSSLFILLAALAMGF, LLCYAGLLIAFGVKLPIVPLH, TAPVHMLLAGILLKMGGYALM, FAPLLVVLGVVNIIYAALTSF, MGFVLIGIGSFSALGTSGAML, QMISHGLIGASLFFLVGATYD, FALWTVCSLASLALPGMSGFV, IVIDGLAAVGVILTPIYLLSM, and VYIIGCLLVPIIGIGLYPRLM.

This sequence belongs to the complex I subunit 4 family.

It localises to the cellular thylakoid membrane. The enzyme catalyses a plastoquinone + NADH + (n+1) H(+)(in) = a plastoquinol + NAD(+) + n H(+)(out). It catalyses the reaction a plastoquinone + NADPH + (n+1) H(+)(in) = a plastoquinol + NADP(+) + n H(+)(out). Its function is as follows. NDH-1 shuttles electrons from NAD(P)H, via FMN and iron-sulfur (Fe-S) centers, to quinones in the respiratory chain. The immediate electron acceptor for the enzyme in this species is believed to be plastoquinone. Couples the redox reaction to proton translocation (for every two electrons transferred, four hydrogen ions are translocated across the cytoplasmic membrane), and thus conserves the redox energy in a proton gradient. This is NAD(P)H-quinone oxidoreductase chain 4 from Synechococcus sp. (strain WH7803).